A 486-amino-acid polypeptide reads, in one-letter code: Ammonium transporter 2 member 1 (486 aa).

The next 11 membrane-spanning stretches (helical) occupy residues alanine 29–valine 49, serine 57–phenylalanine 77, leucine 127–leucine 147, leucine 161–tyrosine 181, glycine 190–glycine 210, isoleucine 225–glycine 245, isoleucine 252–tryptophan 272, valine 285–leucine 305, tryptophan 309–leucine 329, leucine 343–leucine 363, and phenylalanine 399–isoleucine 419. Positions arginine 454–alanine 470 are enriched in basic and acidic residues. Positions arginine 454 to arginine 473 are disordered.

This sequence belongs to the ammonia transporter channel (TC 1.A.11.2) family. In terms of tissue distribution, expressed in roots and leaf blades and sheaths.

Its subcellular location is the cell membrane. Functionally, involved in ammonium transport. The protein is Ammonium transporter 2 member 1 (AMT2-1) of Oryza sativa subsp. japonica (Rice).